The primary structure comprises 1054 residues: MEEEKSFSAWSWSVEQCLKEYKTRLDKGLTSEDVQIRRQKYGFNELAKEKGKPLWHLVLEQFDDTLVKILLGAAFISFVLAFLGEEHGSGSGFEAFVEPFVIVLILILNAVVGVWQESNAEKALEALKEMQCESAKVLRDGNVLPNLPARELVPGDIVELNVGDKVPADMRVSGLKTSTLRVEQSSLTGEAMPVLKGANLVVMDDCELQGKENMVFAGTTVVNGSCVCIVTSIGMDTEIGKIQRQIHEASLEESETPLKKKLDEFGSRLTTAICIVCVLVWMINYKNFVSWDVVDGYKPVNIKFSFEKCTYYFKIAVALAVAAIPEGLPAVITTCLALGTRKMAQKNAIVRKLPSVETLGCTTVICSDKTGTLTTNQMSATEFFTLGGKTTTTRVFSVSGTTYDPKDGGIVDWGCNNMDANLQAVAEICSICNDAGVFYEGKLFRATGLPTEAALKVLVEKMGIPEKKNSENIEEVTNFSDNGSSVKLACCDWWNKRSKKVATLEFDRVRKSMSVIVSEPNGQNRLLVKGAAESILERSSFAQLADGSLVALDESSREVILKKHSEMTSKGLRCLGLAYKDELGEFSDYSSEEHPSHKKLLDPSSYSNIETNLIFVGVVGLRDPPREEVGRAIEDCRDAGIRVMVITGDNKSTAEAICCEIRLFSENEDLSQSSFTGKEFMSLPASRRSEILSKSGGKVFSRAEPRHKQEIVRMLKEMGEIVAMTGDGVNDAPALKLADIGIAMGITGTEVAKEASDMVLADDNFSTIVSAVAEGRSIYNNMKAFIRYMISSNVGEVISIFLTAALGIPECMIPVQLLWVNLVTDGPPATALGFNPADIDIMKKPPRKSDDCLIDSWVLIRYLVIGSYVGVATVGIFVLWYTQASFLGISLISDGHTLVSFTQLQNWSECSSWGTNFTATPYTVAGGLRTIAFENNPCDYFTLGKVKPMTLSLTVLVAIEMFNSLNALSEDNSLLTMPPWRNPWLLVAMTVSFALHCVILYVPFLANVFGIVPLSFREWFVVILVSFPVILIDEALKFIGRCRRTRIKKKIKTM.

Residues Met-1 to Pro-53 are Cytoplasmic-facing. Residues Leu-54–Ala-74 form a helical membrane-spanning segment. At Phe-75–Glu-98 the chain is on the lumenal side. A helical membrane pass occupies residues Pro-99 to Ser-118. Over Asn-119–Leu-262 the chain is Cytoplasmic. The chain crosses the membrane as a helical span at residues Asp-263–Met-282. Topologically, residues Ile-283–Tyr-312 are lumenal. The chain crosses the membrane as a helical span at residues Phe-313 to Ala-330. Residues Val-321, Ala-322, Ile-324, and Glu-326 each coordinate Ca(2+). The Cytoplasmic segment spans residues Val-331–Met-782. Residue Asp-368 is the 4-aspartylphosphate intermediate of the active site. Mg(2+)-binding residues include Asp-727 and Asp-731. A helical transmembrane segment spans residues Lys-783–Leu-802. Ca(2+)-binding residues include Asn-793 and Glu-796. The Lumenal portion of the chain corresponds to Thr-803–Met-812. Residues Ile-813–Gly-833 traverse the membrane as a helical segment. Ca(2+)-binding residues include Asn-821, Thr-824, and Asp-825. Over Phe-834–Leu-853 the chain is Cytoplasmic. A helical transmembrane segment spans residues Ile-854 to Ile-876. The Lumenal portion of the chain corresponds to Phe-877 to Met-949. Residues Thr-950–Ser-969 traverse the membrane as a helical segment. Glu-960 lines the Ca(2+) pocket. Residues Glu-970–Asn-982 lie on the Cytoplasmic side of the membrane. Residues Pro-983–Tyr-1001 traverse the membrane as a helical segment. The Lumenal segment spans residues Val-1002–Phe-1016. The chain crosses the membrane as a helical span at residues Arg-1017–Lys-1037. Topologically, residues Phe-1038–Met-1054 are cytoplasmic.

The protein belongs to the cation transport ATPase (P-type) (TC 3.A.3) family. Type IIA subfamily.

It is found in the membrane. It catalyses the reaction Ca(2+)(in) + ATP + H2O = Ca(2+)(out) + ADP + phosphate + H(+). In terms of biological role, this magnesium-dependent enzyme catalyzes the hydrolysis of ATP coupled with the translocation of calcium from the cytosol to an endomembrane compartment. The chain is Calcium-transporting ATPase 2, endoplasmic reticulum-type (ECA2) from Arabidopsis thaliana (Mouse-ear cress).